The following is a 583-amino-acid chain: Chromosomal replication initiator protein DnaA (583 aa).

The segment at 1-91 is domain I, interacts with DnaA modulators; sequence MNAENLDPAT…SPMFPAFKVM (91 aa). Disordered regions lie at residues 86-179 and 197-232; these read PAFK…QQPV and VAGFGPSVAGTTAPQYPPQSEMQGSFTPGVTGNYRD. The tract at residues 91 to 235 is domain II; the sequence is MPPAQPEPQT…VTGNYRDPVT (145 aa). Over residues 97–106 the composition is skewed to polar residues; the sequence is EPQTTASPED. Composition is skewed to basic and acidic residues over residues 126–135 and 147–174; these read EDSRTPRHSA and QEREDSAVHMARPDEQTAESHREPEHEP. Residues 205–226 show a composition bias toward polar residues; that stretch reads AGTTAPQYPPQSEMQGSFTPGV. The tract at residues 236–460 is domain III, AAA+ region; that stretch reads HLNSNDTFDT…GALKRVIAMA (225 aa). ATP contacts are provided by Gly-280, Gly-282, Lys-283, and Thr-284. The tract at residues 461 to 583 is domain IV, binds dsDNA; the sequence is SLNHQPVTRA…TVELKQHLND (123 aa).

Belongs to the DnaA family. Oligomerizes as a right-handed, spiral filament on DNA at oriC.

Its subcellular location is the cytoplasm. Functionally, plays an essential role in the initiation and regulation of chromosomal replication. ATP-DnaA binds to the origin of replication (oriC) to initiate formation of the DNA replication initiation complex once per cell cycle. Binds the DnaA box (a 9 base pair repeat at the origin) and separates the double-stranded (ds)DNA. Forms a right-handed helical filament on oriC DNA; dsDNA binds to the exterior of the filament while single-stranded (ss)DNA is stabiized in the filament's interior. The ATP-DnaA-oriC complex binds and stabilizes one strand of the AT-rich DNA unwinding element (DUE), permitting loading of DNA polymerase. After initiation quickly degrades to an ADP-DnaA complex that is not apt for DNA replication. Binds acidic phospholipids. The sequence is that of Chromosomal replication initiator protein DnaA from Bifidobacterium animalis subsp. lactis (strain AD011).